The chain runs to 812 residues: Probable E3 ubiquitin-protein ligase hulA (812 aa).

The C2 domain maps to 1-109 (MTCSQPNLRV…QMGGDEMLTR (109 aa)). Disordered regions lie at residues 131-235 (NLST…WERR) and 250-350 (RTTT…YFVD). Composition is skewed to polar residues over residues 148 to 165 (MQPS…ASTP), 174 to 199 (ADPT…STIV), 214 to 223 (SRTNLSSFED), and 250 to 267 (RTTT…QTSR). Residues 226 to 259 (GRLPAGWERREDNLGRTYYVDHNTRTTTWTRPSN) enclose the WW 1 domain. Over residues 276 to 291 (LERRAHQSRMLPEDRT) the composition is skewed to basic and acidic residues. Residues 292–306 (GASSPNLQENQQQAQ) are compositionally biased toward polar residues. Positions 307 to 330 (TPPAGGSASAVSMMATGATTAGTG) are enriched in low complexity. WW domains follow at residues 330-363 (GELP…DPRR) and 390-423 (GPLP…DPRL). An HECT domain is found at 479-812 (SASDLKKRLM…VEETLGFGQE (334 aa)). Cys-780 (glycyl thioester intermediate) is an active-site residue.

The protein belongs to the RSP5/NEDD4 family. As to quaternary structure, interacts with creD.

It localises to the cytoplasm. The enzyme catalyses S-ubiquitinyl-[E2 ubiquitin-conjugating enzyme]-L-cysteine + [acceptor protein]-L-lysine = [E2 ubiquitin-conjugating enzyme]-L-cysteine + N(6)-ubiquitinyl-[acceptor protein]-L-lysine.. The protein operates within protein modification; protein ubiquitination. Functionally, E3 ubiquitin-protein ligase which accepts ubiquitin from an E2 ubiquitin-conjugating enzyme in the form of a thioester and then directly transfers the ubiquitin to targeted substrates. Probably involved in the regulatory network controlling carbon source utilization. This is Probable E3 ubiquitin-protein ligase hulA (hulA) from Aspergillus flavus (strain ATCC 200026 / FGSC A1120 / IAM 13836 / NRRL 3357 / JCM 12722 / SRRC 167).